A 373-amino-acid chain; its full sequence is Carnosine N-methyltransferase (373 aa).

S-adenosyl-L-methionine-binding residues include glutamine 110, arginine 113, glycine 154, glutamate 175, aspartate 242, phenylalanine 243, and cysteine 262. Aspartate 266 lines the carnosine pocket. Position 274 (tyrosine 274) interacts with S-adenosyl-L-methionine. 2 residues coordinate carnosine: histidine 297 and tyrosine 356.

It belongs to the carnosine N-methyltransferase family.

The protein resides in the cytoplasm. Its subcellular location is the nucleus. The catalysed reaction is carnosine + S-adenosyl-L-methionine = anserine + S-adenosyl-L-homocysteine + H(+). In terms of biological role, N-methyltransferase that mediates the formation of anserine (beta-alanyl-N(Pi)-methyl-L-histidine) from carnosine. Also methylates other L-histidine-containing di- and tripeptides such as Gly-Gly-His, Gly-His and homocarnosine (GABA-His). This chain is Carnosine N-methyltransferase, found in Schizosaccharomyces pombe (strain 972 / ATCC 24843) (Fission yeast).